The primary structure comprises 404 residues: MEKIYSVSEFNRMVKSYIDDIDDFQEFFIEGEISNITYYKSGHLYFSIKDSKSQIKCVAFNYKLKRIPEDLKEGDLVKLFGDVGFYEARGDFQVLARYIEKQNALGSLYAKLEKVKEKLTGLGYFNEEHKKDLPKFPKNIGVVTALTGAALQDIIKTTRKRFNSINIYIYPAKVQGIGAEQEIIKGIETLNKIKEIDFIIAGRGGGSIEDLWAFNEEEVAMAFFNSKKPIISAVGHEIDFLLSDLTADKRAATPTQAIELSVPEKESLLEDLKAREIYITKLLKSYVDSMKRELLLRIENYYLKNFPNTVNSLRESIVEKEIQLKEAMESFIEQKRNIFENKIDKISVLNPINTLKRGYTVSQVKNKRIDVLDDIEINDEMMTILKDGKVISVVKEKIYEKNIN.

This sequence belongs to the XseA family. In terms of assembly, heterooligomer composed of large and small subunits.

The protein resides in the cytoplasm. The catalysed reaction is Exonucleolytic cleavage in either 5'- to 3'- or 3'- to 5'-direction to yield nucleoside 5'-phosphates.. Its function is as follows. Bidirectionally degrades single-stranded DNA into large acid-insoluble oligonucleotides, which are then degraded further into small acid-soluble oligonucleotides. In Fusobacterium nucleatum subsp. nucleatum (strain ATCC 25586 / DSM 15643 / BCRC 10681 / CIP 101130 / JCM 8532 / KCTC 2640 / LMG 13131 / VPI 4355), this protein is Exodeoxyribonuclease 7 large subunit.